Consider the following 523-residue polypeptide: Non-specific phospholipase C3 (523 aa).

Residues 44–64 form a disordered region; it reads DGVSESEPRSNPLSTSDPNSA. The span at 52–64 shows a compositional bias: polar residues; the sequence is RSNPLSTSDPNSA.

It belongs to the bacterial phospholipase C family. As to expression, expressed in root tips, cotyledons, on leaf margins, stems, young anthers and funiculus.

The catalysed reaction is a 1-acyl-sn-glycero-3-phosphate + H2O = a 1-acyl-sn-glycerol + phosphate. Possesses specific phosphatase activity toward lysophosphatidic acid (LPA) in vitro. Does not show phospholipase C activity. May play a role in signal transduction and storage lipid synthesis. May be involved in brassinolide-mediated signaling in root development. The sequence is that of Non-specific phospholipase C3 (NPC3) from Arabidopsis thaliana (Mouse-ear cress).